Consider the following 661-residue polypeptide: Potassium voltage-gated channel subfamily KQT member 1 (661 aa).

2 disordered regions span residues 1–29 (MAAA…ESAG) and 42–88 (ESGP…SLDP). Residues 1 to 119 (MAAASTPPRA…YNFLERPTGW (119 aa)) are Cytoplasmic-facing. Ser-27 carries the post-translational modification Phosphoserine; by PKA. Residues 54–85 (VSPPSAPEPAPPASPASPAPPAADQGPQPPVS) show a composition bias toward pro residues. A helical membrane pass occupies residues 120 to 141 (KCFAYHFTVFLIVLVCLIFSVL). The Extracellular segment spans residues 142–152 (STIEQYATLAT). Residues 153 to 175 (GTLFWMEIVLVVFFGTEYVVRLW) traverse the membrane as a helical segment. The Cytoplasmic segment spans residues 176 to 191 (SAGCRSKYVGLWGRLR). A helical transmembrane segment spans residues 192–217 (FARKPISIIDLIVVVASMVVLCVGSK). Over 218–225 (GQVFATSA) the chain is Extracellular. The helical; Voltage-sensor transmembrane segment at 226–241 (IRGIRFLQILRMLHVD) threads the bilayer. The interval 237–245 (MLHVDRQGG) is interaction with KCNE3. Over 242-259 (RQGGTWRLLGSVVFIHRQ) the chain is Cytoplasmic. Gln-243 provides a ligand contact to a 1,2-diacyl-sn-glycero-3-phospho-(1D-myo-inositol-4,5-bisphosphate). The helical transmembrane segment at 260 to 282 (ELITTLYIGFLGLIFSSYFVYLA) threads the bilayer. At 283-298 (EKDAVNESGRVEFGSY) the chain is on the extracellular side. Asn-288 is a glycosylation site (N-linked (GlcNAc...) asparagine). An intramembrane region (pore-forming) is located at residues 299 to 319 (ADALWWGVVTVTTIGYGDKVP). At 320–321 (QT) the chain is on the extracellular side. The chain crosses the membrane as a helical span at residues 322–347 (WVGKTIASCFSVFAISFFALPAGILG). At 348–661 (SGFALKVQQK…VPRRDPEEGS (314 aa)) the chain is on the cytoplasmic side. Residues 369 to 381 (AAASLIQTAWRCY) are interaction with CALM. Phosphoserine occurs at positions 406 and 408. Residues 514–528 (KVIRRMQYFVAKKKF) are interaction with CALM; calcium-dependent. The interaction with KCNE1 C-terminus stretch occupies residues 534–571 (PYDVRDVIEQYSQGHLNLMVRIKELQRRLDQSIGKPSL). A coiled-coil region spans residues 584-620 (SNSIGARLNRVEDKVTQLDQRLVLIADMLQQLLALHQ). Residues 587 to 615 (IGARLNRVEDKVTQLDQRLVLIADMLQQL) form an interaction with AKAP9 region. The segment at 588–619 (GARLNRVEDKVTQLDQRLVLIADMLQQLLALH) is C-terminal assembly domain (tetramerization). A disordered region spans residues 624 to 661 (HGGAHPAQARDGDPADPELFLPTYEQLTVPRRDPEEGS).

This sequence belongs to the potassium channel family. KQT (TC 1.A.1.15) subfamily. Kv7.1/KCNQ1 sub-subfamily. Tetramer. Heterotetramer with KCNE1; targets to the membrane raft. Interacts (via C-terminus) with CALM; forms a heterooctameric structure (with 4:4 KCNQ1:CALM stoichiometry) in a calcium-independent manner. Interacts with AKAP9; targets protein kinase A (PKA) catalytic and regulatory subunits and protein phosphatase 1 (PP1) to the KCNQ1-KCNE1 complex, allowing PKA-mediated phosphorylation and increase of delayed rectifier potassium channel activity. Interacts with KCNE2; form a heterooligomer complex that targets to the membrane raft and leading to currents with an apparently instantaneous activation, a rapid deactivation process and a linear current-voltage relationship and decreases the amplitude of the outward current. Interacts with AP2M1; mediates estrogen-induced internalization via clathrin-coated vesicles. Interacts with NEDD4L; promotes internalization and decreases I(Ks) currents. Interacts with USP2; counteracts the NEDD4L-specific down-regulation of I(Ks) and restore plasma membrane localization. Heterotetramer with KCNQ5; has a voltage-gated potassium channel activity. Interacts with KCNE3; four KCNE3 molecules are bound to one KCNQ1 tetramer (4:4 KCNQ1:KCNE3 stoichiometry); alters membrane raft localization; affects KCNQ1 structure and gating properties. Interacts with KCNE4; impairs KCNQ1 localization in lipid rafts and inhibits voltage-gated potassium channel activity. Interacts with KCNE5; impairs KCNQ1 localization in lipid rafts and only conducts current upon strong and continued depolarization. Interacts with SLC5A3; forms coregulatory channel-transporter complexes that modulate Na(+)-coupled myo-inositol influx through the transporter. Post-translationally, phosphorylation at Ser-27 by PKA; increases delayed rectifier potassium channel activity of the KCNQ1-KCNE1 complex through a macromolecular complex that includes PKA, PP1, and the targeting protein AKAP9. In terms of processing, ubiquitinated by NEDD4L; promotes internalization. The ubiquitinylated form is internalized through a clathrin-mediated endocytosis by interacting with AP2M1 and is recycled back to the cell membrane via RAB4A and RAB11A. Deubiquitinated by USP2; counteracts the NEDD4L-specific down-regulation of I(Ks) and restores the membrane localization.

Its subcellular location is the cell membrane. It is found in the cytoplasmic vesicle membrane. The protein localises to the early endosome. The protein resides in the membrane raft. It localises to the endoplasmic reticulum. Its subcellular location is the basolateral cell membrane. It is found in the apical cell membrane. It catalyses the reaction K(+)(in) = K(+)(out). Its activity is regulated as follows. PIP2 molecule is essential to activate KCNQ channels by inducing the coupling of the voltage-sensing domain (VSD) and the pore-forming domain (PD). Upon channel activation, PIP2 disrupts the VSD-calmodulin/CALM interactions, causing the release of CALM from the VSD which triggers the opening of the gate. Calcium potentiates KCNQ1 channel current through calcium-bound CALM. Calcium-bound CALM competes with PIP2 to stabilize the channel open state. Functionally, pore-forming subunit of the voltage-gated potassium (Kv) channel involved in the regulation of cardiomyocyte excitability and important in normal development and functions of myocardium, inner ear, stomach and colon. Associates with KCNE beta subunits that modulates current kinetics. Induces a voltage-dependent by rapidly activating and slowly deactivating potassium-selective outward current. Also promotes a delayed voltage activated potassium current showing outward rectification characteristic. During beta-adrenergic receptor stimulation participates in cardiac repolarization by associating with KCNE1 to form the I(Ks) cardiac potassium current that increases the amplitude and slows down the activation kinetics of outward potassium current I(Ks). Muscarinic agonist oxotremorine-M strongly suppresses KCNQ1/KCNE1 current. When associated with KCNE3, forms the potassium channel that is important for cyclic AMP-stimulated intestinal secretion of chloride ions. This interaction with KCNE3 is reduced by 17beta-estradiol, resulting in the reduction of currents. During conditions of increased substrate load, maintains the driving force for proximal tubular and intestinal sodium ions absorption, gastric acid secretion, and cAMP-induced jejunal chloride ions secretion. Allows the provision of potassium ions to the luminal membrane of the secretory canaliculus in the resting state as well as during stimulated acid secretion. When associated with KCNE2, forms a heterooligomer complex leading to currents with an apparently instantaneous activation, a rapid deactivation process and a linear current-voltage relationship and decreases the amplitude of the outward current. When associated with KCNE4, inhibits voltage-gated potassium channel activity. When associated with KCNE5, this complex only conducts current upon strong and continued depolarization. Also forms a heterotetramer with KCNQ5 that has a voltage-gated potassium channel activity. Binds with phosphatidylinositol 4,5-bisphosphate. KCNQ1-KCNE2 channel associates with Na(+)-coupled myo-inositol symporter in the apical membrane of choroid plexus epithelium and regulates the myo-inositol gradient between blood and cerebrospinal fluid with an impact on neuron excitability. The protein is Potassium voltage-gated channel subfamily KQT member 1 of Oryctolagus cuniculus (Rabbit).